A 485-amino-acid polypeptide reads, in one-letter code: DNA polymerase subunit gamma-2 (485 aa).

The disordered stretch occupies residues 28 to 65 (GQPELLTERSSPKGGHVKSHAELEGNGEHPEAPGSGEG). The residue at position 38 (S38) is a Phosphoserine. Residues 46-58 (SHAELEGNGEHPE) are compositionally biased toward basic and acidic residues.

As to quaternary structure, heterotrimer composed of a catalytic subunit and a homodimer of accessory subunits (POLG:POLG2).

Its subcellular location is the mitochondrion. The protein resides in the mitochondrion matrix. It is found in the mitochondrion nucleoid. Accessory subunit of DNA polymerase gamma solely responsible for replication of mitochondrial DNA (mtDNA). Acts as an allosteric regulator of the holoenzyme activities. Enhances the polymerase activity and the processivity of POLG by increasing its interactions with the DNA template. Suppresses POLG exonucleolytic proofreading especially toward homopolymeric templates bearing mismatched termini. Binds to single-stranded DNA. This chain is DNA polymerase subunit gamma-2, found in Homo sapiens (Human).